A 360-amino-acid polypeptide reads, in one-letter code: Protein phosphatase methylesterase 1 (360 aa).

The segment at 26–50 (DEDDIPEPAVMPPTGNSSSTANTED) is disordered. Residues S167, D192, and H316 contribute to the active site.

It belongs to the AB hydrolase superfamily.

It catalyses the reaction [phosphatase 2A protein]-C-terminal L-leucine methyl ester + H2O = [phosphatase 2A protein]-C-terminal L-leucine + methanol + H(+). Functionally, demethylates proteins that have been reversibly carboxymethylated. Demethylates the phosphatase PP2A catalytic subunit. Involved in the regulation of filamentous growth. The protein is Protein phosphatase methylesterase 1 (PPE1) of Candida albicans (strain SC5314 / ATCC MYA-2876) (Yeast).